A 296-amino-acid polypeptide reads, in one-letter code: Ribonuclease HIII (296 aa).

Residues 80 to 296 (LALIGSDEVG…NTKKAYQRLK (217 aa)) form the RNase H type-2 domain. Asp-86, Glu-87, and Asp-191 together coordinate a divalent metal cation.

It belongs to the RNase HII family. RnhC subfamily. The cofactor is Mn(2+). It depends on Mg(2+) as a cofactor.

Its subcellular location is the cytoplasm. It catalyses the reaction Endonucleolytic cleavage to 5'-phosphomonoester.. In terms of biological role, endonuclease that specifically degrades the RNA of RNA-DNA hybrids. In Streptococcus thermophilus (strain ATCC BAA-250 / LMG 18311), this protein is Ribonuclease HIII.